Here is a 287-residue protein sequence, read N- to C-terminus: Diphthine methyl ester synthase (287 aa).

Residues Leu-9, Asp-84, Gly-87, 112-113 (SI), Val-163, Val-221, and His-248 contribute to the S-adenosyl-L-methionine site.

This sequence belongs to the diphthine synthase family.

It localises to the cytoplasm. The enzyme catalyses 2-[(3S)-amino-3-carboxypropyl]-L-histidyl-[translation elongation factor 2] + 4 S-adenosyl-L-methionine = diphthine methyl ester-[translation elongation factor 2] + 4 S-adenosyl-L-homocysteine + 3 H(+). The protein operates within protein modification; peptidyl-diphthamide biosynthesis. S-adenosyl-L-methionine-dependent methyltransferase that catalyzes four methylations of the modified target histidine residue in translation elongation factor 2 (EF-2), to form an intermediate called diphthine methyl ester. The four successive methylation reactions represent the second step of diphthamide biosynthesis. This Gibberella zeae (strain ATCC MYA-4620 / CBS 123657 / FGSC 9075 / NRRL 31084 / PH-1) (Wheat head blight fungus) protein is Diphthine methyl ester synthase (DPH5).